The primary structure comprises 298 residues: Cyclin-dependent kinase 2 (298 aa).

Met-1 carries the post-translational modification N-acetylmethionine. The Protein kinase domain occupies 4–286 (FQKVEKIGEG…AKAALAHPFF (283 aa)). Lys-6 carries the post-translational modification N6-acetyllysine. 10 to 18 (IGEGTYGVV) is a binding site for ATP. Thr-14 carries the phosphothreonine modification. Tyr-15 carries the phosphotyrosine; by WEE1 modification. Tyr-19 is modified (phosphotyrosine). ATP is bound by residues Lys-33, 81–83 (EFL), and Asp-86. The Proton acceptor role is filled by Asp-127. Residues 129–132 (KPQN) and Asp-145 each bind ATP. 2 residues coordinate Mg(2+): Asn-132 and Asp-145. At Thr-160 the chain carries Phosphothreonine; by CAK and CCRK.

The protein belongs to the protein kinase superfamily. CMGC Ser/Thr protein kinase family. CDC2/CDKX subfamily. As to quaternary structure, found in a complex with CABLES1, CCNA1 and CCNE1. Interacts with CABLES1. Interacts with UHRF2. Part of a complex consisting of UHRF2, CDK2 and CCNE1. Interacts with the Speedy/Ringo proteins SPDYA and SPDYC. Interaction with SPDYA promotes kinase activation via a conformation change that alleviates obstruction of the substrate-binding cleft by the T-loop. Found in a complex with both SPDYA and CDKN1B/KIP1. Binds to RB1 and CDK7. Binding to CDKN1A (p21) leads to CDK2/cyclin E inactivation at the G1-S phase DNA damage checkpoint, thereby arresting cells at the G1-S transition during DNA repair. Associated with PTPN6 and beta-catenin/CTNNB1. Interacts with CACUL1. May interact with CEP63. Interacts with ANKRD17. Interacts with CEBPA (when phosphorylated). Forms a ternary complex with CCNA2 and CDKN1B; CDKN1B inhibits the kinase activity of CDK2 through conformational rearrangements. Interacts with cyclins A, B1, B3, D, or E. Interacts with CDK2AP2. Mg(2+) is required as a cofactor. Phosphorylated at Thr-160 by CDK7 in a CAK complex. Phosphorylation at Thr-160 promotes kinase activity, whereas phosphorylation at Tyr-15 by WEE1 reduces slightly kinase activity. Phosphorylated on Thr-14 and Tyr-15 during S and G2 phases before being dephosphorylated by CDC25A. Post-translationally, nitrosylated after treatment with nitric oxide (DETA-NO).

Its subcellular location is the cytoplasm. It is found in the cytoskeleton. The protein resides in the microtubule organizing center. The protein localises to the centrosome. It localises to the nucleus. Its subcellular location is the cajal body. It is found in the endosome. It carries out the reaction L-seryl-[protein] + ATP = O-phospho-L-seryl-[protein] + ADP + H(+). It catalyses the reaction L-threonyl-[protein] + ATP = O-phospho-L-threonyl-[protein] + ADP + H(+). Its activity is regulated as follows. Phosphorylation at Thr-14 or Tyr-15 inactivates the enzyme, while phosphorylation at Thr-160 activates it. Stimulated by MYC. Inactivated by CDKN1A (p21). Its function is as follows. Serine/threonine-protein kinase involved in the control of the cell cycle; essential for meiosis, but dispensable for mitosis. Phosphorylates CABLES1, CTNNB1, CDK2AP2, ERCC6, NBN, USP37, p53/TP53, NPM1, CDK7, RB1, BRCA2, MYC, NPAT, EZH2. Triggers duplication of centrosomes and DNA. Acts at the G1-S transition to promote the E2F transcriptional program and the initiation of DNA synthesis, and modulates G2 progression; controls the timing of entry into mitosis/meiosis by controlling the subsequent activation of cyclin B/CDK1 by phosphorylation, and coordinates the activation of cyclin B/CDK1 at the centrosome and in the nucleus. Crucial role in orchestrating a fine balance between cellular proliferation, cell death, and DNA repair in embryonic stem cells (ESCs). Activity of CDK2 is maximal during S phase and G2; activated by interaction with cyclin E during the early stages of DNA synthesis to permit G1-S transition, and subsequently activated by cyclin A2 (cyclin A1 in germ cells) during the late stages of DNA replication to drive the transition from S phase to mitosis, the G2 phase. EZH2 phosphorylation promotes H3K27me3 maintenance and epigenetic gene silencing. Cyclin E/CDK2 prevents oxidative stress-mediated Ras-induced senescence by phosphorylating MYC. Involved in G1-S phase DNA damage checkpoint that prevents cells with damaged DNA from initiating mitosis; regulates homologous recombination-dependent repair by phosphorylating BRCA2, this phosphorylation is low in S phase when recombination is active, but increases as cells progress towards mitosis. In response to DNA damage, double-strand break repair by homologous recombination a reduction of CDK2-mediated BRCA2 phosphorylation. Involved in regulation of telomere repair by mediating phosphorylation of NBN. Phosphorylation of RB1 disturbs its interaction with E2F1. NPM1 phosphorylation by cyclin E/CDK2 promotes its dissociation from unduplicated centrosomes, thus initiating centrosome duplication. Cyclin E/CDK2-mediated phosphorylation of NPAT at G1-S transition and until prophase stimulates the NPAT-mediated activation of histone gene transcription during S phase. Required for vitamin D-mediated growth inhibition by being itself inactivated. Involved in the nitric oxide- (NO) mediated signaling in a nitrosylation/activation-dependent manner. USP37 is activated by phosphorylation and thus triggers G1-S transition. CTNNB1 phosphorylation regulates insulin internalization. Phosphorylates FOXP3 and negatively regulates its transcriptional activity and protein stability. Phosphorylates ERCC6 which is essential for its chromatin remodeling activity at DNA double-strand breaks. Acts as a regulator of the phosphatidylinositol 3-kinase/protein kinase B signal transduction by mediating phosphorylation of the C-terminus of protein kinase B (PKB/AKT1 and PKB/AKT2), promoting its activation. This is Cyclin-dependent kinase 2 (CDK2) from Bos taurus (Bovine).